We begin with the raw amino-acid sequence, 208 residues long: Interferon epsilon (208 aa).

Positions 1-21 are cleaved as a signal peptide; sequence MIIKHFFGTVLVLLASTTIFS. C53 and C163 are oxidised to a cystine. N-linked (GlcNAc...) asparagine glycans are attached at residues N95 and N104.

The protein belongs to the alpha/beta interferon family. As to expression, endometrium-specific.

It localises to the secreted. In terms of biological role, type I interferon required for maintaining basal levels of IFN-regulated genes, including 2'-5'-oligoadenylate synthetase, IRF7 and ISG15, in the female reproductive tract. Directly mediates protection against viral and bacterial genital infections. This is Interferon epsilon (IFNE) from Homo sapiens (Human).